A 465-amino-acid polypeptide reads, in one-letter code: Glutamate--tRNA ligase (465 aa).

The 'HIGH' region signature appears at 8-18 (PSPTGYLHIGG). The 'KMSKS' region motif lies at 236–240 (RLSKR). ATP is bound at residue Lys-239.

The protein belongs to the class-I aminoacyl-tRNA synthetase family. Glutamate--tRNA ligase type 1 subfamily. Monomer.

Its subcellular location is the cytoplasm. The enzyme catalyses tRNA(Glu) + L-glutamate + ATP = L-glutamyl-tRNA(Glu) + AMP + diphosphate. Catalyzes the attachment of glutamate to tRNA(Glu) in a two-step reaction: glutamate is first activated by ATP to form Glu-AMP and then transferred to the acceptor end of tRNA(Glu). This Nitrosospira multiformis (strain ATCC 25196 / NCIMB 11849 / C 71) protein is Glutamate--tRNA ligase.